A 211-amino-acid polypeptide reads, in one-letter code: uncharacterized protein (211 aa).

This is an uncharacterized protein from Mycoplasma pneumoniae (strain ATCC 29342 / M129 / Subtype 1) (Mycoplasmoides pneumoniae).